Here is a 106-residue protein sequence, read N- to C-terminus: Large ribosomal subunit protein uL24 (106 aa).

The protein belongs to the universal ribosomal protein uL24 family. In terms of assembly, part of the 50S ribosomal subunit.

One of two assembly initiator proteins, it binds directly to the 5'-end of the 23S rRNA, where it nucleates assembly of the 50S subunit. Functionally, one of the proteins that surrounds the polypeptide exit tunnel on the outside of the subunit. The sequence is that of Large ribosomal subunit protein uL24 from Blochmanniella floridana.